A 482-amino-acid chain; its full sequence is tRNA sulfurtransferase (482 aa).

A THUMP domain is found at 61–165 (LAIRDALTRI…DDRLLLIKGR (105 aa)). ATP-binding positions include 183-184 (LI), Lys-265, Gly-287, and Gln-296. Cys-344 and Cys-456 are joined by a disulfide. The region spanning 404-482 (FGANDVILDI…GFANVKVYRP (79 aa)) is the Rhodanese domain. Cys-456 (cysteine persulfide intermediate) is an active-site residue.

Belongs to the ThiI family.

The protein resides in the cytoplasm. The catalysed reaction is [ThiI sulfur-carrier protein]-S-sulfanyl-L-cysteine + a uridine in tRNA + 2 reduced [2Fe-2S]-[ferredoxin] + ATP + H(+) = [ThiI sulfur-carrier protein]-L-cysteine + a 4-thiouridine in tRNA + 2 oxidized [2Fe-2S]-[ferredoxin] + AMP + diphosphate. The enzyme catalyses [ThiS sulfur-carrier protein]-C-terminal Gly-Gly-AMP + S-sulfanyl-L-cysteinyl-[cysteine desulfurase] + AH2 = [ThiS sulfur-carrier protein]-C-terminal-Gly-aminoethanethioate + L-cysteinyl-[cysteine desulfurase] + A + AMP + 2 H(+). It participates in cofactor biosynthesis; thiamine diphosphate biosynthesis. Catalyzes the ATP-dependent transfer of a sulfur to tRNA to produce 4-thiouridine in position 8 of tRNAs, which functions as a near-UV photosensor. Also catalyzes the transfer of sulfur to the sulfur carrier protein ThiS, forming ThiS-thiocarboxylate. This is a step in the synthesis of thiazole, in the thiamine biosynthesis pathway. The sulfur is donated as persulfide by IscS. In Salmonella paratyphi B (strain ATCC BAA-1250 / SPB7), this protein is tRNA sulfurtransferase.